The chain runs to 457 residues: D-hydantoinase (457 aa).

Histidine 57 and histidine 59 together coordinate Zn(2+). Serine 69 is subject to Phosphoserine. A Zn(2+)-binding site is contributed by lysine 148. Position 148 is an N6-carboxylysine (lysine 148). Tyrosine 153 is a binding site for substrate. The Zn(2+) site is built by histidine 181 and histidine 237. Position 286 (threonine 286) interacts with substrate. Aspartate 313 contributes to the Zn(2+) binding site. Substrate is bound at residue asparagine 335.

Belongs to the metallo-dependent hydrolases superfamily. Hydantoinase/dihydropyrimidinase family. As to quaternary structure, homodimer and homotetramer. Zn(2+) serves as cofactor. Post-translationally, carboxylation allows a single lysine to coordinate two zinc ions.

Catalyzes the stereospecific hydrolysis of the cyclic amide bond of D-hydantoin derivatives. This Ralstonia pickettii (Burkholderia pickettii) protein is D-hydantoinase (hyuA).